The primary structure comprises 101 residues: Small ribosomal subunit protein uS14 (101 aa).

Belongs to the universal ribosomal protein uS14 family. In terms of assembly, part of the 30S ribosomal subunit. Contacts proteins S3 and S10.

In terms of biological role, binds 16S rRNA, required for the assembly of 30S particles and may also be responsible for determining the conformation of the 16S rRNA at the A site. The sequence is that of Small ribosomal subunit protein uS14 from Synechococcus sp. (strain JA-3-3Ab) (Cyanobacteria bacterium Yellowstone A-Prime).